Reading from the N-terminus, the 401-residue chain is Argininosuccinate synthase (401 aa).

A9–S17 contacts ATP. Y86 serves as a coordination point for L-citrulline. An ATP-binding site is contributed by G116. Positions 118, 122, and 123 each coordinate L-aspartate. Position 122 (N122) interacts with L-citrulline. L-citrulline is bound by residues R126, S174, S183, E259, and Y271.

It belongs to the argininosuccinate synthase family. Type 1 subfamily. Homotetramer.

The protein resides in the cytoplasm. The catalysed reaction is L-citrulline + L-aspartate + ATP = 2-(N(omega)-L-arginino)succinate + AMP + diphosphate + H(+). Its pathway is amino-acid biosynthesis; L-arginine biosynthesis; L-arginine from L-ornithine and carbamoyl phosphate: step 2/3. The polypeptide is Argininosuccinate synthase (Bacillus cytotoxicus (strain DSM 22905 / CIP 110041 / 391-98 / NVH 391-98)).